The chain runs to 443 residues: MKLFDDRGDAGRQLAQRLAQLSGKAVVVLGLPRGGVPVAFEVAKSLQAPLDVLVVRKLGVPFQPELAFGAIGEDGVRVLNDDVVRGTHLDAAAMDAVERKQLIELQRRAERFRRGRDRIPLTGRIAVIVDDGIATGATAKAACQVARAHGADKVVLAVPIGPDDIVARFAGYADEVVCLATPALFFAVGQGYRNFTQTSDDEVVAFLDRAHRDFAEAGAIDAAADPPLRDEEVQVVAGPVPVAGHLTVPEKPRGIVVFAHGSGSSRHSIRNRYVAEVLTGAGFATLLFDLLTPEEERNRANVFDIELLASRLIDVTGWLATQPDTASLPVGYFGASTGAGAALVAAADPRVNVRAVVSRGGRPDLAGDSLGSVVAPTLLIVGGRDQVVLELNQRAQAVIPGKCQLTVVPGATHLFEEPGTLEQVAKLACDWFIDHLCGPGPSG.

In the N-terminal section; belongs to the purine/pyrimidine phosphoribosyltransferase family. The protein in the C-terminal section; belongs to the dienelactone hydrolase family.

This chain is Putative phosphoribosyl transferase MT0597, found in Mycobacterium tuberculosis (strain CDC 1551 / Oshkosh).